The chain runs to 298 residues: Protoheme IX farnesyltransferase (298 aa).

The next 9 helical transmembrane spans lie at 23-43 (LLLL…GKPY), 47-67 (LVVL…NMYF), 93-113 (VFIA…RIIN), 115-135 (HFAL…TYLL), 143-163 (IIAG…AAAG), 169-189 (ALLF…FLAT), 211-231 (IAVA…IVGL), 236-256 (VIGT…FHLA), and 278-298 (MMLG…YIIS).

Belongs to the UbiA prenyltransferase family. Protoheme IX farnesyltransferase subfamily.

It is found in the cell membrane. The catalysed reaction is heme b + (2E,6E)-farnesyl diphosphate + H2O = Fe(II)-heme o + diphosphate. The protein operates within porphyrin-containing compound metabolism; heme O biosynthesis; heme O from protoheme: step 1/1. In terms of biological role, converts heme B (protoheme IX) to heme O by substitution of the vinyl group on carbon 2 of heme B porphyrin ring with a hydroxyethyl farnesyl side group. This chain is Protoheme IX farnesyltransferase, found in Hyperthermus butylicus (strain DSM 5456 / JCM 9403 / PLM1-5).